Reading from the N-terminus, the 474-residue chain is tRNA-2-methylthio-N(6)-dimethylallyladenosine synthase (474 aa).

Positions 3–120 (QKLHIKTWGC…LPEMINQIRG (118 aa)) constitute an MTTase N-terminal domain. 6 residues coordinate [4Fe-4S] cluster: Cys-12, Cys-49, Cys-83, Cys-157, Cys-161, and Cys-164. A Radical SAM core domain is found at 143–375 (RAEGPTAFVS…QERINQQAAQ (233 aa)). A TRAM domain is found at 378–441 (RRMLGTEQRV…TNSLRGEVVR (64 aa)).

Belongs to the methylthiotransferase family. MiaB subfamily. As to quaternary structure, monomer. It depends on [4Fe-4S] cluster as a cofactor.

The protein resides in the cytoplasm. It carries out the reaction N(6)-dimethylallyladenosine(37) in tRNA + (sulfur carrier)-SH + AH2 + 2 S-adenosyl-L-methionine = 2-methylsulfanyl-N(6)-dimethylallyladenosine(37) in tRNA + (sulfur carrier)-H + 5'-deoxyadenosine + L-methionine + A + S-adenosyl-L-homocysteine + 2 H(+). Its function is as follows. Catalyzes the methylthiolation of N6-(dimethylallyl)adenosine (i(6)A), leading to the formation of 2-methylthio-N6-(dimethylallyl)adenosine (ms(2)i(6)A) at position 37 in tRNAs that read codons beginning with uridine. This Haemophilus influenzae (strain PittEE) protein is tRNA-2-methylthio-N(6)-dimethylallyladenosine synthase.